We begin with the raw amino-acid sequence, 360 residues long: MAKSPEVEHPVKAFGWAARDPSGVLSPFNFSRRATGEHDVQFKVLYCGICHSDLHMIKNEWGFTKYPIVPGHEIVGVVTEVGSKVEKFKVGDKVGVGCLVGSCRKCDMCSDDLENYCPGQILTYSAAYTDGTTTYGGYSNLMVSDEHFVICWPENLPMDIGAPLLCAGITTYSPLRYFGLDKPGTHVGVVGLGGLGHVAVKFAKAFGAKVTVISTSESKKQEAIEKLGADAFLVSRDPEQMQGAAGSMDGIIDTVSAVHPVLPLVNLLKSQGKLIMVGAPEKPLELPVFPLLAGRRIIAGSAIGGLKETQEMIDFAAKNNILPDVELVPMDYVNTAMERLLKADVKYRFVIDIGNTLKSA.

In terms of domain architecture, Enoyl reductase (ER) spans 23–351 (GVLSPFNFSR…KADVKYRFVI (329 aa)). Cysteine 50 serves as a coordination point for Zn(2+). Residue serine 52 participates in an alcohol binding. Serine 52 contacts NADP(+). Zn(2+)-binding residues include aspartate 53, histidine 72, glutamate 73, cysteine 103, cysteine 106, cysteine 109, cysteine 117, and cysteine 166. Residue histidine 72 participates in an alcohol binding. Residues leucine 192, glycine 194, leucine 195, serine 214, threonine 215, serine 216, lysine 219, lysine 220, valine 277, alanine 279, serine 301, and arginine 348 each contribute to the NADP(+) site.

It belongs to the zinc-containing alcohol dehydrogenase family. Class-P subfamily. As to quaternary structure, homodimer. The cofactor is Zn(2+). In terms of tissue distribution, mainly expressed in young roots and, to a lower extent, in stems and leaves.

The protein resides in the cytoplasm. It catalyses the reaction (E)-cinnamyl alcohol + NADP(+) = (E)-cinnamaldehyde + NADPH + H(+). Its function is as follows. Alcohol dehydrogenase that catalyzes the conversion of (E)-cinnamyl alcohol to (E)-cinnamaldehyde. This Rauvolfia serpentina (Serpentine wood) protein is Cinnamyl alcohol dehydrogenase 2.